We begin with the raw amino-acid sequence, 407 residues long: Zinc finger protein 260 (407 aa).

The interval 1 to 21 (MLESLQPESELLHDEPDPGEK) is disordered. Basic and acidic residues predominate over residues 10–21 (ELLHDEPDPGEK). A C2H2-type 1 zinc finger spans residues 23–45 (YECDECRKTFSLEQHFVEHKKTH). A C2H2-type 2; degenerate zinc finger spans residues 51-73 (PECTGCGEEFSKASSLTRHLRSR). 11 consecutive C2H2-type zinc fingers follow at residues 79 to 101 (YKCG…QKQH), 131 to 153 (YACK…EKIH), 159 to 181 (FECN…QNVH), 187 to 209 (FKCN…QRIH), 215 to 237 (YECK…QRSH), 243 to 265 (YTCK…EKIH), 271 to 293 (YKCN…HNIH), 299 to 321 (YECN…VRIH), 327 to 349 (YECK…MRSH), 355 to 377 (YGCN…MRIH), and 383 to 405 (YQCS…QRIH).

This sequence belongs to the krueppel C2H2-type zinc-finger protein family. In terms of assembly, binds DNA. Interacts with GATA4. Expressed in both embryonic, fetal and adult heart. Also expressed in lung, skeletal muscle and adrenal glands.

The protein resides in the nucleus. In terms of biological role, transcription factor that acts as a cardiac regulator and an effector of alpha1-adrenergic signaling. Binds to PE response elements (PERE) present in the promoter of genes such as ANF/NPPA and acts as a direct transcriptional activator of NPPA. Also acts as a cofactor with GATA4, a key cardiac regulator. The protein is Zinc finger protein 260 (Znf260) of Rattus norvegicus (Rat).